The primary structure comprises 154 residues: Transcriptional repressor NrdR (154 aa).

The segment at 3 to 34 is a zinc-finger region; the sequence is CPFCGNDETKVLESRQVEEGTAVRRRRECERC. The ATP-cone domain maps to 49 to 139; that stretch reads LIVVKKDGRR…VYREFKDVQR (91 aa).

The protein belongs to the NrdR family. Requires Zn(2+) as cofactor.

In terms of biological role, negatively regulates transcription of bacterial ribonucleotide reductase nrd genes and operons by binding to NrdR-boxes. The polypeptide is Transcriptional repressor NrdR (Desulfitobacterium hafniense (strain DSM 10664 / DCB-2)).